We begin with the raw amino-acid sequence, 296 residues long: Mycothiol acetyltransferase (296 aa).

2 N-acetyltransferase domains span residues 8-146 (RSPE…PPVE) and 151-296 (ISVR…GPPV). Position 39 (E39) interacts with 1D-myo-inositol 2-(L-cysteinylamino)-2-deoxy-alpha-D-glucopyranoside. Acetyl-CoA is bound at residue 76–78 (VVT). Positions 178, 220, and 228 each coordinate 1D-myo-inositol 2-(L-cysteinylamino)-2-deoxy-alpha-D-glucopyranoside. Acetyl-CoA contacts are provided by residues 232-234 (VGV) and 239-245 (QGEGLGR). A 1D-myo-inositol 2-(L-cysteinylamino)-2-deoxy-alpha-D-glucopyranoside-binding site is contributed by Y266.

Belongs to the acetyltransferase family. MshD subfamily. Monomer.

It catalyses the reaction 1D-myo-inositol 2-(L-cysteinylamino)-2-deoxy-alpha-D-glucopyranoside + acetyl-CoA = mycothiol + CoA + H(+). In terms of biological role, catalyzes the transfer of acetyl from acetyl-CoA to desacetylmycothiol (Cys-GlcN-Ins) to form mycothiol. The chain is Mycothiol acetyltransferase from Kytococcus sedentarius (strain ATCC 14392 / DSM 20547 / JCM 11482 / CCUG 33030 / NBRC 15357 / NCTC 11040 / CCM 314 / 541) (Micrococcus sedentarius).